The chain runs to 407 residues: Divalent metal cation transporter MntH (407 aa).

11 helical membrane passes run 16–36, 43–63, 95–115, 119–139, 152–172, 193–213, 239–259, 288–308, 318–338, 346–366, and 387–407; these read LTLL…GNFA, STFG…AMLV, WVQA…GAAV, LLLG…TWGI, FVVG…LVFS, AVYL…IYLH, IAMT…AAAF, LFGL…TLAG, FTIP…VVIA, ILVL…IPLL, and VGRL…VAMI.

This sequence belongs to the NRAMP family.

Its subcellular location is the cell inner membrane. H(+)-stimulated, divalent metal cation uptake system. The polypeptide is Divalent metal cation transporter MntH (Aeromonas hydrophila subsp. hydrophila (strain ATCC 7966 / DSM 30187 / BCRC 13018 / CCUG 14551 / JCM 1027 / KCTC 2358 / NCIMB 9240 / NCTC 8049)).